The following is a 623-amino-acid chain: UvrABC system protein C (623 aa).

The GIY-YIG domain occupies 12-91; it reads PSPGVYLMKS…IKQHRPKYNI (80 aa). One can recognise a UVR domain in the interval 201-236; sequence TEVARLYRSKMNLAAEQMRYEDAARYRDLLRAIEVT. Residues 603 to 623 are disordered; that stretch reads RLHGSPLPNPPPPGEGAMDRK.

This sequence belongs to the UvrC family. In terms of assembly, interacts with UvrB in an incision complex.

The protein localises to the cytoplasm. The UvrABC repair system catalyzes the recognition and processing of DNA lesions. UvrC both incises the 5' and 3' sides of the lesion. The N-terminal half is responsible for the 3' incision and the C-terminal half is responsible for the 5' incision. This is UvrABC system protein C from Citrifermentans bemidjiense (strain ATCC BAA-1014 / DSM 16622 / JCM 12645 / Bem) (Geobacter bemidjiensis).